The sequence spans 182 residues: Nuclear cap-binding protein subunit 2 (182 aa).

MRNA-binding positions include Y13, Y35, 104–108 (RADLD), 115–119 (RQYGR), and 125–126 (QV). In terms of domain architecture, RRM spans 32-110 (NCVYVGNLSF…RIIRADLDHG (79 aa)). A disordered region spans residues 114–182 (GRQYGRGASG…NPRYNRWKKN (69 aa)). The span at 126-136 (VRDEMREEFDP) shows a compositional bias: basic and acidic residues. The segment covering 145–175 (RQPTSSRQLANYSGISSAPLGSSLELQSNPR) has biased composition (polar residues).

This sequence belongs to the RRM NCBP2 family. As to quaternary structure, component of the nuclear cap-binding complex (CBC), a heterodimer composed of cbc1 and cbc2 that interacts with capped RNAs.

The protein localises to the cytoplasm. It localises to the perinuclear region. Its subcellular location is the nucleus. Functionally, component of the CBC complex, which binds co-transcriptionally to the 5' cap of pre-mRNAs and is involved in maturation, export and degradation of nuclear mRNAs. The sequence is that of Nuclear cap-binding protein subunit 2 (cbc2) from Schizosaccharomyces pombe (strain 972 / ATCC 24843) (Fission yeast).